We begin with the raw amino-acid sequence, 277 residues long: Leucine-rich repeat-containing protein 10 (277 aa).

7 LRR repeats span residues 53–74 (ELVKLYLSDNHLNSLPPELGQL), 76–97 (NLQILALDFNNFKALPQVVCTL), 99–120 (QLCILYLGNNKLCDLPSELSLL), 122–143 (NLRTLWIEANCLTQLPDVVCEL), 145–167 (LLKTLHAGSNALRLLPGQLRRLQ), 168–189 (ELRTIWLSGNRLTDFPTVLLHM), and 191–212 (FLEVIDVDWNSIRYFPSLAHLS).

It is found in the nucleus. In terms of biological role, may play important roles in cardiac development and/or cardiac function. The sequence is that of Leucine-rich repeat-containing protein 10 (LRRC10) from Homo sapiens (Human).